Here is a 224-residue protein sequence, read N- to C-terminus: PKHD-type hydroxylase KPN78578_12210 (224 aa).

Residues 77-176 form the Fe2OG dioxygenase domain; that stretch reads TISAPLFNRY…RQASFLWIQS (100 aa). The Fe cation site is built by His95, Asp97, and His157. Arg167 contributes to the 2-oxoglutarate binding site.

Fe(2+) is required as a cofactor. It depends on L-ascorbate as a cofactor.

The sequence is that of PKHD-type hydroxylase KPN78578_12210 from Klebsiella pneumoniae subsp. pneumoniae (strain ATCC 700721 / MGH 78578).